A 142-amino-acid polypeptide reads, in one-letter code: Hemoglobin subunit alpha-C (142 aa).

At Ala2 the chain carries N-acetylalanine. One can recognise a Globin domain in the interval 2–142 (ALNCDDKAHI…VSGLLTSKYR (141 aa)). His59 serves as a coordination point for O2. A heme b-binding site is contributed by His88.

It belongs to the globin family. Heterotetramer of either two alpha-B chains or two alpha-C chains and two beta chains. The two major hemoglobins, B and C, associate upon deoxygenation to form a trimer of tetramers, BC2, that has a much lower affinity for oxygen than either component alone. In terms of tissue distribution, red blood cells.

The alpha-C chain is a component of adult hemoglobin C. In Aquarana catesbeiana (American bullfrog), this protein is Hemoglobin subunit alpha-C.